A 189-amino-acid chain; its full sequence is ADP-ribosylation factor H (189 aa).

GTP-binding positions include 34-40 (DGAGKST), 75-79 (DVGGQ), and 134-137 (NKQD).

The protein belongs to the small GTPase superfamily. Arf family.

It is found in the golgi apparatus. Functionally, GTP-binding protein that may be involved in protein trafficking. May modulate vesicle budding and uncoating within the Golgi apparatus. The protein is ADP-ribosylation factor H (arrH) of Dictyostelium discoideum (Social amoeba).